The following is a 4367-amino-acid chain: Guanylate cyclase (4367 aa).

Positions 1–10 are enriched in polar residues; sequence MKKTRTTAAE. The tract at residues 1 to 70 is disordered; the sequence is MKKTRTTAAE…MSFLQGKHQQ (70 aa). The Cytoplasmic portion of the chain corresponds to 1–150; the sequence is MKKTRTTAAE…FKNLWEQFHR (150 aa). Residues 19–33 are compositionally biased toward basic and acidic residues; the sequence is PHDEHRGRGREHGGA. Positions 54–63 are enriched in polar residues; the sequence is HQATQKQMSF. The helical transmembrane segment at 151-171 threads the bilayer; that stretch reads VINWWFLVMAIIQAIPQLHYN. Residues 172-174 are Extracellular-facing; sequence PNH. The chain crosses the membrane as a helical span at residues 175–195; the sequence is AWSTALPFAIVLVFGMLKDAF. Residues 196–373 are Cytoplasmic-facing; that stretch reads TDLGRRERDR…GFKRPHIEKD (178 aa). A helical transmembrane segment spans residues 374 to 394; sequence INTYLFISFFIVFLTILISVM. Over 395–452 the chain is Extracellular; the sequence is SKWSVQERDSGDTGVTDAGASSGSGSSSGETSQTYGSSVEFMLGSRDLLQNPWMSILR. The interval 402–426 is disordered; it reads RDSGDTGVTDAGASSGSGSSSGETS. Over residues 407-426 the composition is skewed to low complexity; sequence TGVTDAGASSGSGSSSGETS. The chain crosses the membrane as a helical span at residues 453–473; that stretch reads FLAVYAPVLPLSLPLILDVVY. At 474–2258 the chain is on the cytoplasmic side; sequence LLQSVLIEGD…VHGRLSLMRV (1785 aa). Disordered stretches follow at residues 486 to 535, 550 to 699, 831 to 918, 932 to 966, 980 to 1047, 1079 to 1164, 1344 to 1593, 1607 to 1652, 1773 to 1861, and 1881 to 1946; these read IRGG…QQPL, SEKF…ISGR, ETSA…ASSL, RLEE…PQLA, VGIQ…GELS, GMSF…MPAV, PSGT…SLKS, FRRG…TGTG, GGRG…GLRS, and DKQH…PQHL. Residues 523–535 show a composition bias toward polar residues; the sequence is AHSSQNASLQQPL. 2 stretches are compositionally biased toward basic and acidic residues: residues 605–628 and 670–679; these read ETLR…REQL and RRSDDRDRKS. The segment covering 850–863 has biased composition (low complexity); sequence SAASSRSQSAPASA. Over residues 880-892 the composition is skewed to polar residues; sequence QTLTNQQTGQQSP. Residues 906–917 show a composition bias toward low complexity; that stretch reads ASPGAADSPASS. A compositionally biased stretch (basic and acidic residues) spans 932-948; it reads RLEETGSQKEEDSRSDR. The segment covering 983-996 has biased composition (low complexity); the sequence is QSQHSSQSLLSSRQ. Positions 1025 to 1047 are enriched in basic and acidic residues; that stretch reads DRMYSRDYHRESRSSSPRDGELS. Composition is skewed to polar residues over residues 1084–1094 and 1117–1130; these read SRPSSQFTFSS and RSLT…TASP. The segment covering 1344–1357 has biased composition (low complexity); it reads PSGTSASSGAPSGP. 2 stretches are compositionally biased toward gly residues: residues 1370–1381 and 1389–1400; these read QGQGHGSLGAPG and CLGGAGGSGARG. The segment covering 1443 to 1454 has biased composition (pro residues); the sequence is VPSPRPLSPAGP. Residues 1527–1542 are compositionally biased toward basic and acidic residues; sequence SFKEKHEEFAFSKDED. Residues 1543–1567 show a composition bias toward acidic residues; that stretch reads TATVDQDDTQSATDEEHDVEGEEEE. Low complexity predominate over residues 1583–1593; that stretch reads SASASLMSLKS. 3 stretches are compositionally biased toward polar residues: residues 1628-1652, 1779-1791, and 1843-1852; these read GRSS…TGTG, VSLS…SSAK, and VNPSGQTYSQ. The span at 1881-1922 shows a compositional bias: basic and acidic residues; sequence DKQHQRGHGPEGDEGSHELEGHDAHTGDSHGGHHRDQAEPRA. Residues 1933–1942 are compositionally biased toward polar residues; the sequence is RLPQKTQNRL. A helical transmembrane segment spans residues 2259-2279; that stretch reads STVILWSFFKSLCIGLPTFLF. At 2280–2289 the chain is on the extracellular side; the sequence is QPQAFWSAVE. Residues 2290–2310 form a helical membrane-spanning segment; that stretch reads VYDPLLLMIVDFFWTTLPGII. Topologically, residues 2311 to 2343 are cytoplasmic; that stretch reads HGYSDQDLPTHLLPSVPVLYTPGRRRLYFNGFR. A helical transmembrane segment spans residues 2344–2364; the sequence is FILWTVEGIIYSFLIFYLLQA. At 2365-2376 the chain is on the extracellular side; that stretch reads TWMDGNTFHDGQ. Residues 2377–2397 form a helical membrane-spanning segment; it reads VLGFHSYGILLLFGSLLQSNV. Residues 2398–2408 are Cytoplasmic-facing; the sequence is RIILETSLWTP. A helical transmembrane segment spans residues 2409-2429; the sequence is TFLFTTIVLCTIMFFPTVLLY. The Extracellular portion of the chain corresponds to 2430-2444; it reads SVTGWPRRYMELAGR. A helical membrane pass occupies residues 2445–2465; it reads VVFAWPMLYFLIPLWVSIGIL. At 2466–2724 the chain is on the cytoplasmic side; sequence VQLLLQVFTS…LKRLVPWYRV (259 aa). Residues 2725 to 2745 traverse the membrane as a helical segment; sequence IFMLIALYQLLSFLTEYFIDI. Residues 2746–2762 lie on the Extracellular side of the membrane; the sequence is HWNPGETEMEPWMCVPT. Residues 2763-2783 form a helical membrane-spanning segment; sequence LVVEIGFAAVVVCTFYDFIFL. The Cytoplasmic segment spans residues 2784-2785; that stretch reads DH. Residues 2786–2806 form a helical membrane-spanning segment; the sequence is FSLILNSIVFLMVSSSIVFYT. The Extracellular segment spans residues 2807 to 2823; the sequence is ASHVDGTLTSVLFPVFT. The chain crosses the membrane as a helical span at residues 2824–2844; sequence FVILRISFLQAVVWNILFLIV. The Cytoplasmic portion of the chain corresponds to 2845–2858; the sequence is TVARFMLDKKYLPP. A helical membrane pass occupies residues 2859 to 2879; sequence LNFVHYIPLFIGIDVFVAFVG. At 2880 to 2903 the chain is on the extracellular side; it reads YRLEYNQRKSFLLDYSVDASRRKQ. Residues 2904–2924 traverse the membrane as a helical segment; that stretch reads REILNTMLPSFVVDQMINSEL. Residues 2925–3693 lie on the Cytoplasmic side of the membrane; the sequence is NEEGIPTSLK…RTHFYNNKSN (769 aa). A Guanylate cyclase 1 domain is found at 2942–3150; the sequence is SVIFCDVYEF…DTVNTASRMK (209 aa). Disordered regions lie at residues 3214-3245, 3359-3402, 3456-3475, 3485-3508, 3523-3596, and 3620-3653; these read DVIS…ASSG, GQTE…SRFD, SGDE…EVPL, QARE…HTPT, GCAA…ETEK, and FRRR…VDDE. Over residues 3383 to 3402 the composition is skewed to basic and acidic residues; the sequence is RADRRPAGRREDSRGDSRFD. 3 stretches are compositionally biased toward basic and acidic residues: residues 3485–3499, 3529–3541, and 3549–3569; these read QARE…KRSG, EEEK…RESE, and TESR…DARE. A compositionally biased stretch (low complexity) spans 3626–3637; it reads AAPSEAASPSSA. Residues 3694–3714 traverse the membrane as a helical segment; the sequence is INTIEQALIIFLVTFCVQTLT. The Extracellular segment spans residues 3715–3736; sequence RLALPRFYVVCSHHTINLHVCT. Residues 3737–3757 traverse the membrane as a helical segment; it reads GLYWAVRATYTLAAFVLWMLF. The Cytoplasmic portion of the chain corresponds to 3758-3772; the sequence is HYRNRKEVATCLELR. A helical transmembrane segment spans residues 3773–3793; it reads WMVFLLNLLFISASCVFALSN. The Extracellular segment spans residues 3794-3895; sequence SWGVCGQQQE…GSDLVTANGR (102 aa). A helical transmembrane segment spans residues 3896–3916; sequence AYTYWLLSDTIELFFYIVILH. The Cytoplasmic portion of the chain corresponds to 3917-3921; the sequence is HNTGL. The helical transmembrane segment at 3922–3942 threads the bilayer; that stretch reads LFQNCILVDVLLMTMSLTFII. Residues 3943 to 3950 lie on the Extracellular side of the membrane; sequence TTARETAS. The helical transmembrane segment at 3951–3971 threads the bilayer; it reads TVSTIATFPCYVFFNLVSAYC. Residues 3972 to 4367 are Cytoplasmic-facing; the sequence is KEYIDRLTFY…GSTPGSALGS (396 aa). The Guanylate cyclase 2 domain occupies 4024–4159; sequence TFLFADICGF…MDVLTGNMME (136 aa). Mg(2+) contacts are provided by Asp-4029, Ile-4030, and Asp-4073. Residues 4292–4367 are disordered; that stretch reads ASHGDSGPSD…GSTPGSALGS (76 aa). Over residues 4333 to 4344 the composition is skewed to basic and acidic residues; the sequence is DGLKQLRKEIER. Residues 4356-4367 are compositionally biased toward polar residues; sequence DIGSTPGSALGS.

The protein in the N-terminal section; belongs to the cation transport ATPase (P-type) (TC 3.A.3) family. Type IV subfamily. It in the C-terminal section; belongs to the adenylyl cyclase class-4/guanylyl cyclase family. In terms of assembly, interacts with chaperone CDC50.1; the interaction regulates guanylate cyclase GC trafficking and sensing environmental changes. Interacts with UGO; the interaction regulates guanylate cyclase GC trafficking and catalytic activity. The cofactor is Mg(2+). Mn(2+) is required as a cofactor.

The protein resides in the cell membrane. The catalysed reaction is GTP = 3',5'-cyclic GMP + diphosphate. In terms of biological role, catalyzes the synthesis of the second messenger cGMP from GTP. During the tachyzoite lytic growth cycle in host cells, detects and transduces environmental changes in potassium, phosphatidic acid and pH levels. By producing cGMP in response to these environmental changes, activates PKG and thereby regulates PKG-dependent microneme secretion which is essential for tachyzoite motility, host cell attachment invasion of and egress from host cells. May play a role in the fission of connected tachyzoites at their basal pole during egress. Does not display flippase activity towards phosphatidylserine, phosphatidic acid or phosphatidylcholine. The protein is Guanylate cyclase of Toxoplasma gondii (strain ATCC 50853 / GT1).